An 890-amino-acid polypeptide reads, in one-letter code: Phosphotransferase RcsD (890 aa).

Topologically, residues 1–21 are cytoplasmic; sequence MRQKETTATTRFSLLPGSITR. A helical membrane pass occupies residues 22–42; sequence FFLLLIIVLLVTMGVMVQSAV. At 43-308 the chain is on the periplasmic side; that stretch reads NAWLKDKSYQ…GTLLLDTLQN (266 aa). The helical transmembrane segment at 309–329 threads the bilayer; the sequence is ILLPLLLNIGLLALALFGYTT. Residues 330-890 lie on the Cytoplasmic side of the membrane; that stretch reads FRHFSSRSTE…DIDSYVKSLL (561 aa). The tract at residues 468–678 is histidine-like kinase; the sequence is NIGDALKEPA…RYSVHIKMLA (211 aa). Residues 803–890 form the HPt domain; sequence AQLHASGYYA…DIDSYVKSLL (88 aa). Position 842 is a phosphohistidine (His-842).

The protein belongs to the RcsD family. As to quaternary structure, interacts with RcsC and RcsB. Has a higher affinity for RcsB than for RcsC. Post-translationally, phosphorylated by RcsC.

Its subcellular location is the cell inner membrane. Its function is as follows. Component of the Rcs signaling system, which controls transcription of numerous genes. RcsD is a phosphotransfer intermediate between the sensor kinase RcsC and the response regulator RcsB. It acquires a phosphoryl group from RcsC and transfers it to RcsB. The system controls expression of genes involved in colanic acid capsule synthesis, biofilm formation and cell division. In Escherichia coli (strain K12), this protein is Phosphotransferase RcsD.